The primary structure comprises 69 residues: Ribosome modulation factor (69 aa).

It belongs to the ribosome modulation factor family.

Its subcellular location is the cytoplasm. During stationary phase, converts 70S ribosomes to an inactive dimeric form (100S ribosomes). The sequence is that of Ribosome modulation factor from Hahella chejuensis (strain KCTC 2396).